The sequence spans 275 residues: Translation initiation factor 2 subunit alpha (275 aa).

The 72-residue stretch at 12-83 folds into the S1 motif domain; the sequence is GEFVIATVKS…NKGHIDLSLK (72 aa).

It belongs to the eIF-2-alpha family. In terms of assembly, heterotrimer composed of an alpha, a beta and a gamma chain.

In terms of biological role, eIF-2 functions in the early steps of protein synthesis by forming a ternary complex with GTP and initiator tRNA. This is Translation initiation factor 2 subunit alpha from Thermococcus onnurineus (strain NA1).